Consider the following 1788-residue polypeptide: Laminin subunit beta-1 (1788 aa).

The signal sequence occupies residues 1 to 24 (MLELRLIVVIVLALLSWQWDPVDS). The disordered stretch occupies residues 23–43 (DSQRPPQHGRRDRPKYPPNKF). A Laminin N-terminal domain is found at 50–287 (ERSSCYPATG…GISNMVVRGS (238 aa)). Asn-138, Asn-201, and Asn-232 each carry an N-linked (GlcNAc...) asparagine glycan. 19 cysteine pairs are disulfide-bonded: Cys-288-Cys-297, Cys-290-Cys-318, Cys-320-Cys-329, Cys-332-Cys-352, Cys-355-Cys-364, Cys-357-Cys-382, Cys-385-Cys-394, Cys-397-Cys-415, Cys-418-Cys-431, Cys-420-Cys-446, Cys-448-Cys-457, Cys-460-Cys-475, Cys-478-Cys-491, Cys-480-Cys-498, Cys-500-Cys-509, Cys-512-Cys-526, Cys-529-Cys-541, Cys-531-Cys-548, and Cys-550-Cys-559. Laminin EGF-like domains are found at residues 288-354 (CSCY…ACKK), 355-417 (CECN…VCQP), 418-477 (CDCD…GCEP), and 478-528 (CTCN…GCSL). Residue Asn-487 is glycosylated (N-linked (GlcNAc...) asparagine). In terms of domain architecture, Laminin EGF-like 5; truncated spans 529–559 (CNCDAGGSYDNYCDVISGQCRCRPHMTGRSC). In terms of domain architecture, Laminin IV type B spans 567-783 (FIPLLPEVHE…LDNILSVFVH (217 aa)). Asn-591 carries N-linked (GlcNAc...) asparagine glycosylation. Positions 641–643 (RGD) match the Cell attachment site motif. 32 cysteine pairs are disulfide-bonded: Cys-789/Cys-801, Cys-791/Cys-808, Cys-810/Cys-819, Cys-822/Cys-834, Cys-837/Cys-849, Cys-839/Cys-856, Cys-858/Cys-867, Cys-870/Cys-880, Cys-883/Cys-892, Cys-885/Cys-899, Cys-902/Cys-911, Cys-914/Cys-930, Cys-933/Cys-949, Cys-935/Cys-960, Cys-962/Cys-971, Cys-974/Cys-988, Cys-991/Cys-1005, Cys-993/Cys-1012, Cys-1015/Cys-1024, Cys-1027/Cys-1040, Cys-1043/Cys-1057, Cys-1045/Cys-1064, Cys-1066/Cys-1075, Cys-1078/Cys-1091, Cys-1094/Cys-1106, Cys-1096/Cys-1113, Cys-1115/Cys-1124, Cys-1127/Cys-1139, Cys-1142/Cys-1154, Cys-1144/Cys-1161, Cys-1163/Cys-1172, and Cys-1175/Cys-1186. 8 consecutive Laminin EGF-like domains span residues 789 to 836 (CNCN…GCKA), 837 to 882 (CDCN…ECRV), 883 to 932 (CQCN…GCRP), 933 to 990 (CRCP…TCSK), 991 to 1042 (CECS…NCQQ), 1043 to 1093 (CECD…GCES), 1094 to 1141 (CNCD…KCQP), and 1142 to 1188 (CECD…HCSP). Asn-1051 is a glycosylation site (N-linked (GlcNAc...) asparagine). A domain II region spans residues 1189 to 1405 (CGECFNNWDL…SQIPELNNQV (217 aa)). Asn-1246, Asn-1301, Asn-1330, and Asn-1341 each carry an N-linked (GlcNAc...) asparagine glycan. Positions 1255 to 1405 (EKLDYETQSL…SQIPELNNQV (151 aa)) form a coiled coil. Positions 1406–1432 (CGKPGDPCDSLCGGAGCGHCGGFLSCE) are domain alpha. Residues 1433-1788 (HGAKTHSEEA…RGSHYRQCYT (356 aa)) are domain I. Residues 1453 to 1505 (ITSKKDQADQTIRALTQAKLNASEAYEKAKRGFEQSERYLNQTNANIKLAENL) adopt a coiled-coil conformation. Asn-1473, Asn-1493, and Asn-1515 each carry an N-linked (GlcNAc...) asparagine glycan. A coiled-coil region spans residues 1540–1561 (EEIETLGDQINRAVSSLKNVEA). N-linked (GlcNAc...) asparagine glycans are attached at residues Asn-1581, Asn-1644, and Asn-1703. Residues 1608-1762 (QGKAKDAIQQ…QQLLRLQAEI (155 aa)) adopt a coiled-coil conformation. Positions 1690 to 1719 (GEANNLQSATSATNQTLTDRASRSENARER) are disordered. Polar residues predominate over residues 1693–1708 (NNLQSATSATNQTLTD). A compositionally biased stretch (basic and acidic residues) spans 1709–1719 (RASRSENARER).

As to quaternary structure, laminin is a complex glycoprotein, consisting of three different polypeptide chains (alpha, beta, gamma), which are bound to each other by disulfide bonds into a cross-shaped molecule comprising one long and three short arms with globules at each end. As to expression, found in the basement membranes (major component).

The protein resides in the secreted. The protein localises to the extracellular space. Its subcellular location is the extracellular matrix. It is found in the basement membrane. Its function is as follows. Binding to cells via a high affinity receptor, laminin is thought to mediate the attachment, migration and organization of cells into tissues during embryonic development by interacting with other extracellular matrix components. Required for Ndg localization to the basement membrane. The chain is Laminin subunit beta-1 (LanB1) from Drosophila melanogaster (Fruit fly).